Reading from the N-terminus, the 431-residue chain is Peptidase B (431 aa).

Lys196 and Asp201 together coordinate Mn(2+). Lys208 is an active-site residue. Mn(2+)-binding residues include Asp219, Asp278, and Glu280. Arg282 is an active-site residue.

Belongs to the peptidase M17 family. As to quaternary structure, homohexamer. Mn(2+) serves as cofactor.

Its subcellular location is the cytoplasm. It catalyses the reaction Release of an N-terminal amino acid, Xaa, from a peptide or arylamide. Xaa is preferably Glu or Asp but may be other amino acids, including Leu, Met, His, Cys and Gln.. Its function is as follows. Probably plays an important role in intracellular peptide degradation. In Serratia proteamaculans (strain 568), this protein is Peptidase B.